Consider the following 287-residue polypeptide: Carbon monoxide dehydrogenase medium chain (287 aa).

Positions 1-177 constitute an FAD-binding PCMH-type domain; sequence MIPPRFEYHA…VEIRVPAFAQ (177 aa). FAD is bound by residues 32–36 and 111–115; these read AGGHS and TIGGD.

In terms of assembly, dimer of heterotrimers. Each heterotrimer consists of a large, a medium and a small subunit. It depends on FAD as a cofactor.

The enzyme catalyses CO + a quinone + H2O = a quinol + CO2. Its function is as follows. Catalyzes the oxidation of carbon monoxide to carbon dioxide. The polypeptide is Carbon monoxide dehydrogenase medium chain (cutM) (Hydrogenophaga pseudoflava (Pseudomonas carboxydoflava)).